We begin with the raw amino-acid sequence, 555 residues long: MSEAEARPSNFIRQIIDEDLASGKHTSVHTRFPPEPNGYLHIGHAKSICLNFGIAQDYQGQCNLRFDDTNPVKEDVEFVESIKRDVEWLGFTWSGDVRYSSDYFDQLYQYAVELINKGLAYVDELTPEQMREYRGTLTAPGKNSPYRDRSVEENLALFEKMRAGGFAEGTACLRAKIDMASPFMVMRDPVLYRIKFAEHHQSGNKWCIYPMYDFTHCISDAIEGITHSLCTLEFQDNRRLYDWVLDNISIECHPRQYEFSRLNLEYSIMSKRKLNLLVTEKVVEGWDDPRMPTISGLRRRGYTAASIREFCRRIGVTKQDNNVEMMALESCIRDDLNENAPRAMAVLDPIKVVIENRAAGEEWLTMPNHPNNPDMGTRQVPFDSEIYIDRADFREEANKQYKRLVLGKEVRLRNAYVIKAERVEKDAEGHVTTLYCSYDAETLNKDPADGRKVKGVIHWVSVKHALPAEIRLYDRLFSVPNPAAAEDFLSTINPESLIIRQGFVEPSLADAVPEKTYQFEREGYFCADSHYSRPDALVFNRTVGLRDTWAAKVTN.

The 'HIGH' region motif lies at Pro34–His44. Residues Glu35–Asn37 and His41–Ser47 contribute to the ATP site. Residues Asp67 and Tyr212 each contribute to the L-glutamine site. ATP-binding positions include Thr231, Arg261–Leu262, and Met269–Lys271. Positions Ile268–Arg272 match the 'KMSKS' region motif.

The protein belongs to the class-I aminoacyl-tRNA synthetase family. In terms of assembly, monomer.

It localises to the cytoplasm. The catalysed reaction is tRNA(Gln) + L-glutamine + ATP = L-glutaminyl-tRNA(Gln) + AMP + diphosphate. This Yersinia enterocolitica serotype O:8 / biotype 1B (strain NCTC 13174 / 8081) protein is Glutamine--tRNA ligase.